The primary structure comprises 309 residues: Homoserine kinase (309 aa).

An ATP-binding site is contributed by 91 to 101; sequence PIGSGLGSSAC.

The protein belongs to the GHMP kinase family. Homoserine kinase subfamily.

It is found in the cytoplasm. It carries out the reaction L-homoserine + ATP = O-phospho-L-homoserine + ADP + H(+). It participates in amino-acid biosynthesis; L-threonine biosynthesis; L-threonine from L-aspartate: step 4/5. Catalyzes the ATP-dependent phosphorylation of L-homoserine to L-homoserine phosphate. The chain is Homoserine kinase from Yersinia enterocolitica serotype O:8 / biotype 1B (strain NCTC 13174 / 8081).